The chain runs to 185 residues: Large ribosomal subunit protein bL25 (185 aa).

The protein belongs to the bacterial ribosomal protein bL25 family. CTC subfamily. In terms of assembly, part of the 50S ribosomal subunit; part of the 5S rRNA/L5/L18/L25 subcomplex. Contacts the 5S rRNA. Binds to the 5S rRNA independently of L5 and L18.

This is one of the proteins that binds to the 5S RNA in the ribosome where it forms part of the central protuberance. The sequence is that of Large ribosomal subunit protein bL25 from Chlamydia muridarum (strain MoPn / Nigg).